Consider the following 71-residue polypeptide: MIIPVRCFTCGKVIGNKWDQYLDLLQLDYTEGDALDALQLVRYCCRRMLMTHVDLIEKLLNYNTLEKSDNS.

Zn(2+)-binding residues include C7, C10, C44, and C45.

The protein belongs to the archaeal Rpo10/eukaryotic RPB10 RNA polymerase subunit family. In terms of assembly, component of the RNA polymerase II, IV and V complexes. Interacts with NRPD1.

Its subcellular location is the nucleus. Functionally, DNA-dependent RNA polymerase catalyzes the transcription of DNA into RNA using the four ribonucleoside triphosphates as substrates. Component of RNA polymerase II which synthesizes mRNA precursors and many functional non-coding RNAs. Pol II is the central component of the basal RNA polymerase II transcription machinery. It is composed of mobile elements that move relative to each other. Component of RNA polymerases IV and V which mediate short-interfering RNAs (siRNA) accumulation and subsequent RNA-directed DNA methylation-dependent (RdDM) transcriptional gene silencing (TGS) of endogenous repeated sequences, including transposable elements. This is DNA-directed RNA polymerases II, IV and V subunit 10 (NRPB10) from Arabidopsis thaliana (Mouse-ear cress).